We begin with the raw amino-acid sequence, 495 residues long: DNA-directed RNA polymerase subunit alpha (495 aa).

Residues 1–301 (MPYIKHIETK…RMLASLQAPP (301 aa)) are alpha N-terminal domain (alpha-NTD). Disordered stretches follow at residues 159-227 (SLVP…EAPH) and 391-495 (QEQV…PEET). Residues 170-237 (PRDPLEPEND…IPSMRDDHMT (68 aa)) are insert. The segment covering 172-186 (DPLEPENDSKSETKS) has biased composition (basic and acidic residues). Composition is skewed to polar residues over residues 207–219 (VNAQ…SNST) and 391–403 (QEQV…SQIA). The alpha C-terminal domain (alpha-CTD) stretch occupies residues 317-495 (AKEIALTPIE…LSSSQNPEET (179 aa)). The span at 417–426 (RPIDSKETRR) shows a compositional bias: basic and acidic residues. Basic residues predominate over residues 444–453 (RKSSKTKVKA). Composition is skewed to polar residues over residues 464–473 (KSANLQQAEE) and 486–495 (LSSSQNPEET).

Belongs to the RNA polymerase alpha chain family. As to quaternary structure, in plastids the minimal PEP RNA polymerase catalytic core is composed of four subunits: alpha, beta, beta', and beta''. When a (nuclear-encoded) sigma factor is associated with the core the holoenzyme is formed, which can initiate transcription.

The protein resides in the plastid. It localises to the chloroplast. The catalysed reaction is RNA(n) + a ribonucleoside 5'-triphosphate = RNA(n+1) + diphosphate. DNA-dependent RNA polymerase catalyzes the transcription of DNA into RNA using the four ribonucleoside triphosphates as substrates. The polypeptide is DNA-directed RNA polymerase subunit alpha (Nephroselmis olivacea (Green alga)).